Here is a 54-residue protein sequence, read N- to C-terminus: Large ribosomal subunit protein bL32 (54 aa).

Residues 1 to 24 form a disordered region; sequence MAVQKSKPTRSKRGMRRSHDSLKE. Over residues 7–16 the composition is skewed to basic residues; sequence KPTRSKRGMR.

Belongs to the bacterial ribosomal protein bL32 family.

The chain is Large ribosomal subunit protein bL32 from Buchnera aphidicola subsp. Schizaphis graminum (strain Sg).